We begin with the raw amino-acid sequence, 149 residues long: uncharacterized protein (149 aa).

3 consecutive transmembrane segments (helical) span residues 39–61 (VPLG…LIIG), 82–104 (VFGY…GAIL), and 119–141 (WMMM…SIYL).

To M.pneumoniae MPN_090.

It localises to the cell membrane. This is an uncharacterized protein from Mycoplasma pneumoniae (strain ATCC 29342 / M129 / Subtype 1) (Mycoplasmoides pneumoniae).